A 132-amino-acid chain; its full sequence is Small ribosomal subunit protein uS8 (132 aa).

This sequence belongs to the universal ribosomal protein uS8 family. In terms of assembly, part of the 30S ribosomal subunit. Contacts proteins S5 and S12.

In terms of biological role, one of the primary rRNA binding proteins, it binds directly to 16S rRNA central domain where it helps coordinate assembly of the platform of the 30S subunit. This is Small ribosomal subunit protein uS8 from Bacillus cytotoxicus (strain DSM 22905 / CIP 110041 / 391-98 / NVH 391-98).